The chain runs to 76 residues: U-scoloptoxin(15)-Ssd3b (76 aa).

Positions 1-23 (MEKKIIFLCFLVALLTFPEFISS) are cleaved as a signal peptide.

In terms of processing, contains 2 disulfide bonds. As to expression, expressed by the venom gland.

Its subcellular location is the secreted. The chain is U-scoloptoxin(15)-Ssd3b from Scolopendra dehaani (Thai centipede).